The following is a 221-amino-acid chain: Beta-phosphoglucomutase (221 aa).

Asp8 acts as the Nucleophile in catalysis. Mg(2+) contacts are provided by Asp8 and Asp10. The residue at position 8 (Asp8) is a 4-aspartylphosphate. The active-site Proton donor/acceptor is the Asp10. 7 residues coordinate beta-D-glucose 6-phosphate: Asp10, Gly46, Val47, Arg49, Ser116, Lys117, and Asn118. A Mg(2+)-binding site is contributed by Asp170.

Belongs to the HAD-like hydrolase superfamily. CbbY/CbbZ/Gph/YieH family. Monomer. The cofactor is Mg(2+). In terms of processing, autophosphorylated.

It is found in the cytoplasm. The enzyme catalyses beta-D-glucose 1-phosphate = beta-D-glucose 6-phosphate. With respect to regulation, activated by phosphorylation. Competitively inhibited by alpha-D-galactose-1-phosphate. In terms of biological role, catalyzes the interconversion of D-glucose 1-phosphate (G1P) and D-glucose 6-phosphate (G6P), forming beta-D-glucose 1,6-(bis)phosphate (beta-G16P) as an intermediate. The beta-phosphoglucomutase (Beta-PGM) acts on the beta-C(1) anomer of G1P. Glucose or lactose are used in preference to maltose, which is only utilized after glucose or lactose has been exhausted. It plays a key role in the regulation of the flow of carbohydrate intermediates in glycolysis and the formation of the sugar nucleotide UDP-glucose. The polypeptide is Beta-phosphoglucomutase (Lactococcus lactis subsp. lactis (strain IL1403) (Streptococcus lactis)).